A 198-amino-acid chain; its full sequence is Nuclear transcription factor Y subunit A-4 (198 aa).

The tract at residues 1–47 (MTSSVHELSDNNESHAKKERPDSQTRPQVPSGRSSESIDTNSVYSEP) is disordered. Residues 7–23 (ELSDNNESHAKKERPDS) are compositionally biased toward basic and acidic residues. Positions 24-44 (QTRPQVPSGRSSESIDTNSVY) are enriched in polar residues. Positions 101–124 (FVNAKQYHGILRRRQSRAKLEARN) match the Subunit association domain (SAD) motif. The segment at residues 131-156 (KPYMHESRHLHAIRRPRGCGGRFLNA) is a DNA-binding region (NFYA/HAP2-type). The tract at residues 136–198 (ESRHLHAIRR…MATSGPNGRS (63 aa)) is disordered. Basic and acidic residues predominate over residues 156-166 (AKKENGDHKEE).

Belongs to the NFYA/HAP2 subunit family. As to quaternary structure, heterotrimeric transcription factor composed of three components, NF-YA, NF-YB and NF-YC. NF-YB and NF-YC must interact and dimerize for NF-YA association and DNA binding. Expressed in stems, caulines, and senescent flowers.

It localises to the nucleus. Functionally, stimulates the transcription of various genes by recognizing and binding to a CCAAT motif in promoters. This is Nuclear transcription factor Y subunit A-4 (NFYA4) from Arabidopsis thaliana (Mouse-ear cress).